The sequence spans 1060 residues: Probable serine/threonine-protein kinase MARK-A (1060 aa).

Composition is skewed to basic and acidic residues over residues 1-11 (METLKEEEQFR) and 23-37 (HLKE…EREQ). 2 disordered regions span residues 1–52 (METL…LQLQ) and 67–88 (NKIP…SISV). Low complexity-rich tracts occupy residues 38–52 (QQQQ…LQLQ) and 68–88 (KIPS…SISV). Residues 109 to 361 (YLVIKTIGRG…MEEIINHPWL (253 aa)) enclose the Protein kinase domain. ATP contacts are provided by residues 115-123 (IGRGQFGKV) and Lys-139. The active-site Proton acceptor is the Asp-232. Residues 409-475 (INNINNTMAT…TTTTNATTTT (67 aa)) show a composition bias toward low complexity. Disordered regions lie at residues 409 to 488 (INNI…NNEE), 560 to 701 (GENS…SPLC), 714 to 886 (LREK…PVHS), and 899 to 966 (DDKS…QEPR). The UBA domain maps to 488-528 (ELDQEIIEELVGLGFEREELCNSIRQNKYNDAASTYFLLQG). A compositionally biased stretch (polar residues) spans 577–594 (TVDSPKSTNTPQYRSSNT). Low complexity-rich tracts occupy residues 603-613 (QQQQQQQQQQQ), 620-637 (QQQN…NNHN), 650-699 (STTV…NPSP), and 720-760 (TTTN…TSPN). Residues 761–770 (LQPFSLASTA) are compositionally biased toward polar residues. Low complexity-rich tracts occupy residues 771 to 799 (NNNN…SLNS) and 811 to 831 (QQQQ…NSSS). A compositionally biased stretch (basic and acidic residues) spans 837–846 (QRQESRKLED). 2 stretches are compositionally biased toward low complexity: residues 904-926 (NSSS…TNNT) and 935-965 (QNSN…QQEP). One can recognise a KA1 domain in the interval 1008–1057 (IECETEGVRFSIEICRLPRLSVNGLKFKRIGGSSWRYKSICKDLLSQMKL).

Belongs to the protein kinase superfamily. CAMK Ser/Thr protein kinase family. SNF1 subfamily.

The catalysed reaction is L-seryl-[protein] + ATP = O-phospho-L-seryl-[protein] + ADP + H(+). The enzyme catalyses L-threonyl-[protein] + ATP = O-phospho-L-threonyl-[protein] + ADP + H(+). The chain is Probable serine/threonine-protein kinase MARK-A (mrkA) from Dictyostelium discoideum (Social amoeba).